Here is a 1358-residue protein sequence, read N- to C-terminus: Regulatory protein SIR4 (1358 aa).

A compositionally biased stretch (polar residues) spans 1–15 (MPNDNKTPNRSSTPK). Disordered regions lie at residues 1-98 (MPND…PHSN), 252-277 (SLSVPKVSAGDSGISPEESKARSPGI), 356-466 (HDEK…PPEI), 498-544 (VQGE…ISNG), 677-726 (ASTE…EDEQ), 752-787 (VSDSDDSSSDNDSLTDLESLSSGESNEIKVTNDLDT), and 913-970 (HSQE…ENLS). Over residues 26-39 (KIPEREEKSNEVKT) the composition is skewed to basic and acidic residues. 2 stretches are compositionally biased toward polar residues: residues 49–66 (KSKNYSRPSTAIHTSPHQ) and 75–96 (HKQLQQPKSSPLKKNNYNSFPH). The segment covering 373-388 (QKMKEDADLKRMEILK) has biased composition (basic and acidic residues). A compositionally biased stretch (polar residues) spans 428 to 437 (QENNYNSTSR). A compositionally biased stretch (basic and acidic residues) spans 452-464 (KNGENKKIGKRPP). The segment covering 507-517 (RNNTLNVTPSK) has biased composition (polar residues). Position 692 is a phosphoserine (S692). Over residues 706–720 (FPVSLSQPSKKSFAN) the composition is skewed to polar residues. The segment covering 754–766 (DSDDSSSDNDSLT) has biased composition (acidic residues). Positions 777-787 (NEIKVTNDLDT) are enriched in basic and acidic residues. Residues 916-932 (EQNSSSAKPSQIPTVSS) are compositionally biased toward polar residues. A Glycyl lysine isopeptide (Lys-Gly) (interchain with G-Cter in SUMO) cross-link involves residue K1128. Positions 1271 to 1347 (LSFVDIVLSK…DAKINKLMEK (77 aa)) form a coiled coil.

Homodimer. Interacts with MPS3. Interacts with RIS1. Interacts with SIR1, SIR2 and SIR3. Interacts with YKU80. Interacts with UBP10. Interacts with RAP1 (via C-terminus).

The protein localises to the nucleus. In terms of biological role, the proteins SIR1 through SIR4 are required for transcriptional repression of the silent mating type loci, HML and HMR. The proteins SIR2 through SIR4 repress mulitple loci by modulating chromatin structure. Involves the compaction of chromatin fiber into a more condensed form. The chain is Regulatory protein SIR4 (SIR4) from Saccharomyces cerevisiae (strain ATCC 204508 / S288c) (Baker's yeast).